Reading from the N-terminus, the 184-residue chain is Mediator of RNA polymerase II transcription subunit 11 (184 aa).

Over residues 142-152 (ATTKQETNINN) the composition is skewed to polar residues. The segment at 142-184 (ATTKQETNINNEDSEKEKQENITAIETKKESSENEDEDFDMIA) is disordered. Over residues 154 to 173 (DSEKEKQENITAIETKKESS) the composition is skewed to basic and acidic residues. Positions 174–184 (ENEDEDFDMIA) are enriched in acidic residues.

The protein belongs to the Mediator complex subunit 11 family. As to quaternary structure, component of the Mediator complex.

It localises to the nucleus. Its function is as follows. Component of the Mediator complex, a coactivator involved in the regulated transcription of nearly all RNA polymerase II-dependent genes. Mediator functions as a bridge to convey information from gene-specific regulatory proteins to the basal RNA polymerase II transcription machinery. Mediator is recruited to promoters by direct interactions with regulatory proteins and serves as a scaffold for the assembly of a functional pre-initiation complex with RNA polymerase II and the general transcription factors. This chain is Mediator of RNA polymerase II transcription subunit 11 (MED11), found in Debaryomyces hansenii (strain ATCC 36239 / CBS 767 / BCRC 21394 / JCM 1990 / NBRC 0083 / IGC 2968) (Yeast).